Here is a 428-residue protein sequence, read N- to C-terminus: Tyrosine--tRNA ligase (428 aa).

Y36 is an L-tyrosine binding site. A 'HIGH' region motif is present at residues 41-50 (PTAPSLHAGH). Positions 171 and 175 each coordinate L-tyrosine. The 'KMSKS' region signature appears at 231-235 (KFGKS). Residue K234 participates in ATP binding. In terms of domain architecture, S4 RNA-binding spans 359–416 (DSIVDLLVETGLAASKGAARRNVAEGGVYVNNIRIESDEWIPQHSDFLHERWLVLRRG).

Belongs to the class-I aminoacyl-tRNA synthetase family. TyrS type 1 subfamily. In terms of assembly, homodimer.

It is found in the cytoplasm. The catalysed reaction is tRNA(Tyr) + L-tyrosine + ATP = L-tyrosyl-tRNA(Tyr) + AMP + diphosphate + H(+). Catalyzes the attachment of tyrosine to tRNA(Tyr) in a two-step reaction: tyrosine is first activated by ATP to form Tyr-AMP and then transferred to the acceptor end of tRNA(Tyr). The polypeptide is Tyrosine--tRNA ligase (Mycolicibacterium fortuitum (Mycobacterium fortuitum)).